Consider the following 1071-residue polypeptide: Carbamoyl phosphate synthase large chain (1071 aa).

The carboxyphosphate synthetic domain stretch occupies residues 1–403; sequence MPKRTDLKSI…SFQKALRGLE (403 aa). Residues Arg129, Arg169, Gly175, Gly176, Gln208, Val210, Glu215, Gly241, Val242, His243, Gln285, and Glu299 each contribute to the ATP site. Positions 133–328 constitute an ATP-grasp 1 domain; that stretch reads KEAMEKIGLS…IAKVAAKLAV (196 aa). The Mg(2+) site is built by Gln285, Glu299, and Asn301. Residues Gln285, Glu299, and Asn301 each contribute to the Mn(2+) site. The interval 404–548 is oligomerization domain; that stretch reads TGLCGFNPRS…YSTYEEECES (145 aa). A carbamoyl phosphate synthetic domain region spans residues 549 to 930; the sequence is RPSDRKKVMI…AYYKAQLGAG (382 aa). The ATP-grasp 2 domain occupies 673 to 864; it reads QKVLNDLGLR…LAKVGARCMA (192 aa). ATP contacts are provided by Arg709, Phe748, Leu750, Glu755, Gly780, Ile781, His782, Ser783, Gln823, and Glu835. Residues Gln823, Glu835, and Asn837 each contribute to the Mg(2+) site. Mn(2+) contacts are provided by Gln823, Glu835, and Asn837. The 141-residue stretch at 931 to 1071 folds into the MGS-like domain; sequence ERLNPTGKIF…ELHGRLKNRN (141 aa). The segment at 931-1071 is allosteric domain; the sequence is ERLNPTGKIF…ELHGRLKNRN (141 aa).

Belongs to the CarB family. In terms of assembly, composed of two chains; the small (or glutamine) chain promotes the hydrolysis of glutamine to ammonia, which is used by the large (or ammonia) chain to synthesize carbamoyl phosphate. Tetramer of heterodimers (alpha,beta)4. The cofactor is Mg(2+). It depends on Mn(2+) as a cofactor.

The enzyme catalyses hydrogencarbonate + L-glutamine + 2 ATP + H2O = carbamoyl phosphate + L-glutamate + 2 ADP + phosphate + 2 H(+). The catalysed reaction is hydrogencarbonate + NH4(+) + 2 ATP = carbamoyl phosphate + 2 ADP + phosphate + 2 H(+). It participates in amino-acid biosynthesis; L-arginine biosynthesis; carbamoyl phosphate from bicarbonate: step 1/1. It functions in the pathway pyrimidine metabolism; UMP biosynthesis via de novo pathway; (S)-dihydroorotate from bicarbonate: step 1/3. Functionally, large subunit of the glutamine-dependent carbamoyl phosphate synthetase (CPSase). CPSase catalyzes the formation of carbamoyl phosphate from the ammonia moiety of glutamine, carbonate, and phosphate donated by ATP, constituting the first step of 2 biosynthetic pathways, one leading to arginine and/or urea and the other to pyrimidine nucleotides. The large subunit (synthetase) binds the substrates ammonia (free or transferred from glutamine from the small subunit), hydrogencarbonate and ATP and carries out an ATP-coupled ligase reaction, activating hydrogencarbonate by forming carboxy phosphate which reacts with ammonia to form carbamoyl phosphate. In Neisseria meningitidis serogroup B (strain ATCC BAA-335 / MC58), this protein is Carbamoyl phosphate synthase large chain.